Reading from the N-terminus, the 182-residue chain is MEWDSTSVKETDVALYTKPQRKQSIRERYTSKFSNVEQNLLKTDDDDDDDNNNININNNNATITTTSTTTTTTTTSTTKTFTISTDNYDEDVNDDQDEGDSGYNNNNNNNNNNNNNNNNNNNNNNSNNNNNNNNKIKNKLNQLETSSDLDFNNQNNNNEDEDDEFLSKDDNIEEIQRNQKGN.

The disordered stretch occupies residues 40–182; it reads LLKTDDDDDD…EEIQRNQKGN (143 aa). A compositionally biased stretch (low complexity) spans 52–86; the sequence is NNININNNNATITTTSTTTTTTTTSTTKTFTISTD. Residues 87-100 are compositionally biased toward acidic residues; it reads NYDEDVNDDQDEGD. 2 stretches are compositionally biased toward low complexity: residues 104-134 and 148-157; these read NNNNNNNNNNNNNNNNNNNNNNSNNNNNNNN and DLDFNNQNNN. Basic and acidic residues predominate over residues 165 to 182; it reads FLSKDDNIEEIQRNQKGN.

This is an uncharacterized protein from Dictyostelium discoideum (Social amoeba).